The primary structure comprises 90 residues: DNA-binding protein HTa (90 aa).

It belongs to the bacterial histone-like protein family. Homotetramer.

In terms of biological role, histone-like DNA-binding protein which is capable of wrapping DNA to stabilize it, and thus to prevent its denaturation under extreme environmental conditions. The sequence is that of DNA-binding protein HTa from Thermoplasma acidophilum (strain ATCC 25905 / DSM 1728 / JCM 9062 / NBRC 15155 / AMRC-C165).